The primary structure comprises 181 residues: Ribonuclease HII (181 aa).

Residues 1 to 181 (MICGIDEVGR…SLHRKSFRLI (181 aa)) form the RNase H type-2 domain. The a divalent metal cation site is built by Asp-6, Glu-7, and Asp-98.

This sequence belongs to the RNase HII family. The cofactor is Mn(2+). Requires Mg(2+) as cofactor.

Its subcellular location is the cytoplasm. The enzyme catalyses Endonucleolytic cleavage to 5'-phosphomonoester.. Functionally, endonuclease that specifically degrades the RNA of RNA-DNA hybrids. This is Ribonuclease HII from Borrelia recurrentis (strain A1).